Reading from the N-terminus, the 574-residue chain is DNA-directed primase/polymerase protein (574 aa).

The stretch at 2 to 22 forms a coiled coil; the sequence is KRKWEERVKKVEELASYYERN. Residues Arg76, 116 to 118, 167 to 171, 291 to 294, and Lys300 contribute to the substrate site; these read DLE, KFSRH, and RNFR. Asp116 and Glu118 together coordinate Mn(2+). Zn(2+)-binding residues include Cys424, His431, Cys451, and Cys456. The Zinc knuckle motif motif lies at 424–457; the sequence is CENIGRAHRSNNIMILVDLKKEVWYQKCHDPVCR.

The protein belongs to the eukaryotic-type primase small subunit family. Mn(2+) serves as cofactor.

The protein resides in the nucleus. It is found in the mitochondrion matrix. Its subcellular location is the chromosome. The enzyme catalyses ssDNA + n NTP = ssDNA/pppN(pN)n-1 hybrid + (n-1) diphosphate.. It catalyses the reaction DNA(n) + a 2'-deoxyribonucleoside 5'-triphosphate = DNA(n+1) + diphosphate. In terms of biological role, DNA primase and DNA polymerase required to tolerate replication-stalling lesions by bypassing them. Required to facilitate mitochondrial and nuclear replication fork progression by initiating de novo DNA synthesis using dNTPs and acting as an error-prone DNA polymerase able to bypass certain DNA lesions. Shows a high capacity to tolerate DNA damage lesions such as 8oxoG and abasic sites in DNA. Provides different translesion synthesis alternatives when DNA replication is stalled: able to synthesize DNA primers downstream of lesions, such as UV lesions, R-loops and G-quadruplexes, to allow DNA replication to continue. Can also realign primers ahead of 'unreadable lesions' such as abasic sites and 6-4 photoproduct (6-4 pyrimidine-pyrimidinone), thereby skipping the lesion. Repriming avoids fork degradation while leading to accumulation of internal ssDNA gaps behind the forks. Also able to incorporate nucleotides opposite DNA lesions such as 8oxoG, like a regular translesion synthesis DNA polymerase. Also required for reinitiating stalled forks after ultraviolet (UV) damage during nuclear DNA replication. Required for mitochondrial DNA (mtDNA) synthesis and replication, by reinitiating synthesis after UV damage or in the presence of chain-terminating nucleotides. In addition to its role in DNA damage response, also required to maintain efficient nuclear and mitochondrial DNA replication in unperturbed cells. This chain is DNA-directed primase/polymerase protein, found in Gallus gallus (Chicken).